The primary structure comprises 275 residues: Formamidopyrimidine-DNA glycosylase (275 aa).

The Schiff-base intermediate with DNA role is filled by Pro2. The active-site Proton donor is Glu3. The active-site Proton donor; for beta-elimination activity is the Lys58. DNA-binding residues include His91, Arg109, and Arg154. The segment at 240-274 (AVYERAGLPCRVCGTPIRRLVQGQRATYFCPSCQK) adopts an FPG-type zinc-finger fold. The active-site Proton donor; for delta-elimination activity is Arg264.

This sequence belongs to the FPG family. As to quaternary structure, monomer. It depends on Zn(2+) as a cofactor.

It catalyses the reaction Hydrolysis of DNA containing ring-opened 7-methylguanine residues, releasing 2,6-diamino-4-hydroxy-5-(N-methyl)formamidopyrimidine.. The enzyme catalyses 2'-deoxyribonucleotide-(2'-deoxyribose 5'-phosphate)-2'-deoxyribonucleotide-DNA = a 3'-end 2'-deoxyribonucleotide-(2,3-dehydro-2,3-deoxyribose 5'-phosphate)-DNA + a 5'-end 5'-phospho-2'-deoxyribonucleoside-DNA + H(+). Its function is as follows. Involved in base excision repair of DNA damaged by oxidation or by mutagenic agents. Acts as a DNA glycosylase that recognizes and removes damaged bases. Has a preference for oxidized purines, such as 7,8-dihydro-8-oxoguanine (8-oxoG). Has AP (apurinic/apyrimidinic) lyase activity and introduces nicks in the DNA strand. Cleaves the DNA backbone by beta-delta elimination to generate a single-strand break at the site of the removed base with both 3'- and 5'-phosphates. This is Formamidopyrimidine-DNA glycosylase from Bordetella pertussis (strain Tohama I / ATCC BAA-589 / NCTC 13251).